A 587-amino-acid polypeptide reads, in one-letter code: MKDTIRQLIQQALDQLTADGTLPAGLTPDIQVENTKDRSHGDFASNIAMMLAKPAGMKPRDLAARLVEAIPAHEQLAKVEIAGPGFLNFFQDHVWLAASLDRALADERLGVRKAGPAQRVVIDLSSPNLAKEMHVGHLRSTIIGDAVARVLEFLGDTVIRQNHVGDWGTQFGMLLAYLEEQPIDAEAELHDLEVFYRAAKKRFDESPEFADRARELVVKLQAGDPDCLRLWTRFNEISLSHCQKVYDRLGVKLSMADVMGESAYNDDLAQVVADLTAKGLLTEDNGALCVFLEEFKNAEGNPLPVIVQKAGGGYLYATTDLAAMRYRHNVLHADRVLYFVDQRQALHFQQVFEVARRAGFVPAGMELEHMGFGTMNGADGRPFKTRDGGTVKLIDLLEEAESRAYALVKERNEQRAERGEEPFDEVQLREIGRVVGIDSVKYADLSKHRTSDYSFNFELMLSFEGNTAPYLLYACTRVASVFRKLGQGREQLGGKIVLEQPQELALAAQLAQFGDLINNVALKGVPHLLCAYLYELAGLFSSFYEHCPILTAEDPAQKDSRLRLAALTGRTLEQGLELLGLKTLERM.

The 'HIGH' region motif lies at 127 to 137; it reads PNLAKEMHVGH.

Belongs to the class-I aminoacyl-tRNA synthetase family. In terms of assembly, monomer.

It is found in the cytoplasm. The enzyme catalyses tRNA(Arg) + L-arginine + ATP = L-arginyl-tRNA(Arg) + AMP + diphosphate. This Pseudomonas aeruginosa (strain LESB58) protein is Arginine--tRNA ligase.